The following is a 311-amino-acid chain: Putative UPF0607 protein ENSP00000382826 (311 aa).

The span at 48–61 (AEEPKEATEVKDQV) shows a compositional bias: basic and acidic residues. Disordered regions lie at residues 48-99 (AEEP…WYNP), 186-229 (GLLM…PLQL), and 291-311 (RKQL…GSCL). A compositionally biased stretch (polar residues) spans 78 to 97 (EAASTSRPLETQGNLTSSWY). Basic residues-rich tracts occupy residues 213–222 (AGHRSRKRKL) and 291–305 (RKQL…RQGR).

Belongs to the UPF0607 family.

The polypeptide is Putative UPF0607 protein ENSP00000382826 (Homo sapiens (Human)).